A 119-amino-acid polypeptide reads, in one-letter code: Single-stranded DNA-binding protein (119 aa).

The region spanning 3 to 102 (INIVTLVGRV…IRVDQLELLG (100 aa)) is the SSB domain.

As to quaternary structure, homotetramer.

This Anabaena variabilis protein is Single-stranded DNA-binding protein (ssb1).